Consider the following 252-residue polypeptide: Trans-aconitate 2-methyltransferase (252 aa).

Belongs to the methyltransferase superfamily. Tam family.

Its subcellular location is the cytoplasm. It carries out the reaction trans-aconitate + S-adenosyl-L-methionine = (E)-3-(methoxycarbonyl)pent-2-enedioate + S-adenosyl-L-homocysteine. Its function is as follows. Catalyzes the S-adenosylmethionine monomethyl esterification of trans-aconitate. The chain is Trans-aconitate 2-methyltransferase from Escherichia fergusonii (strain ATCC 35469 / DSM 13698 / CCUG 18766 / IAM 14443 / JCM 21226 / LMG 7866 / NBRC 102419 / NCTC 12128 / CDC 0568-73).